The chain runs to 217 residues: Large ribosomal subunit protein uL1 (217 aa).

The protein belongs to the universal ribosomal protein uL1 family. In terms of assembly, part of the 50S ribosomal subunit.

Its function is as follows. Binds directly to 23S rRNA. Probably involved in E site tRNA release. Protein L1 is also a translational repressor protein, it controls the translation of its operon by binding to its mRNA. The protein is Large ribosomal subunit protein uL1 of Thermoplasma acidophilum (strain ATCC 25905 / DSM 1728 / JCM 9062 / NBRC 15155 / AMRC-C165).